Here is a 262-residue protein sequence, read N- to C-terminus: Phosphonates import ATP-binding protein PhnC (262 aa).

The region spanning Ile-5–Asn-253 is the ABC transporter domain. Gly-37–Ser-44 is an ATP binding site.

It belongs to the ABC transporter superfamily. Phosphonates importer (TC 3.A.1.9.1) family. In terms of assembly, the complex is composed of two ATP-binding proteins (PhnC), two transmembrane proteins (PhnE) and a solute-binding protein (PhnD).

The protein localises to the cell inner membrane. It catalyses the reaction phosphonate(out) + ATP + H2O = phosphonate(in) + ADP + phosphate + H(+). In terms of biological role, part of the ABC transporter complex PhnCDE involved in phosphonates import. Responsible for energy coupling to the transport system. The chain is Phosphonates import ATP-binding protein PhnC from Shigella boydii serotype 4 (strain Sb227).